A 661-amino-acid polypeptide reads, in one-letter code: Chermesin D/asnovolin J monooxidase nvfH (661 aa).

N12 is a glycosylation site (N-linked (GlcNAc...) asparagine). A helical membrane pass occupies residues 89-111 (VLIIGAGYGGLLFAVRIIQTGAF). FAD contacts are provided by residues 128 to 131 (TWYW), 140 to 141 (DV), and Y146. 138–140 (MCD) contributes to the NADP(+) binding site. NADP(+) is bound by residues 286-292 (TGATAIQ) and 309-310 (RT). N382 and N538 each carry an N-linked (GlcNAc...) asparagine glycan.

It belongs to the FAD-binding monooxygenase family. FAD is required as a cofactor.

It is found in the membrane. The enzyme catalyses chermesin D + AH2 + O2 = asnovolin I + A + H2O. The catalysed reaction is asnovolin J + AH2 + O2 = asnovolin A + A + H2O. Its pathway is secondary metabolite biosynthesis; terpenoid biosynthesis. In terms of biological role, chermesin D/asnovolin J monooxidase; part of the gene cluster that mediates the biosynthesis of novofumigatonin, a heavily oxygenated meroterpenoid containing a unique orthoester moiety. The first step of the pathway is the synthesis of 3,5-dimethylorsellinic acid (DMOA) by the polyketide synthase nvfA via condensation of one acetyl-CoA starter unit with 3 malonyl-CoA units and 2 methylations. DMOA is then converted to farnesyl-DMOA by the farnesyltransferase nvfB. Epoxydation by FAD-dependent monooxygenase nvfK, followed by a protonation-initiated cyclization catalyzed by the terpene cyclase nvfL leads to the production of asnavolin H. The short chain dehydrogenase nvfC then as a 3-OH dehydrogenase of asnovolin H to yield chemesin D. There are two branches to synthesize asnovolin A from chemesin D. In one branch, chemesin D undergoes Baeyer-Villiger oxidation by nvfH, methylation by nvfJ, and enoyl reduction by the nvfM D enoylreductase that reduces the double bond between C-5'and C-6', to form respectively asnovolin I, asnovolin K, and asnovolin A. In the other branch, the methylation precedes the Baeyer-Villiger oxidation and the enoyl reduction to yield asnovolin A via the asnovolin J intermediate. Asnovolin A is further converted to fumigatonoid A by the Fe(II)/2-oxoglutarate-dependent dioxygenase nvfI that catalyzes an endoperoxidation reaction. The alpha/beta hydrolase nvfD then acts as an epimerase that converts fumigatonoid A to its C-5' epimer, which then undergoes spontaneous or nvfD-catalyzed lactonization. The following step utilizes the ketoreductase nvfG to produce fumigatonoid B. The dioxygenase nvfE further converts fumigatonoid B into fumigatonoid C. Finally the Fe(II)/2-oxoglutarate-dependent dioxygenase nvfF catalyzes two rounds of oxidation to transform fumigatonoid C into the end product, novofumigatonin A. This Aspergillus novofumigatus (strain IBT 16806) protein is Chermesin D/asnovolin J monooxidase nvfH.